A 279-amino-acid polypeptide reads, in one-letter code: Eukaryotic translation initiation factor 3 subunit G (279 aa).

Disordered stretches follow at residues 69–90 (AKYG…QLGE) and 149–193 (LNGG…EARD). Ser-77 carries the phosphoserine modification. The RRM domain maps to 196–275 (TTLKVSQLNT…LILHLEWSKK (80 aa)).

Belongs to the eIF-3 subunit G family. Component of the eukaryotic translation initiation factor 3 (eIF-3) complex.

The protein resides in the cytoplasm. Functionally, RNA-binding component of the eukaryotic translation initiation factor 3 (eIF-3) complex, which is involved in protein synthesis of a specialized repertoire of mRNAs and, together with other initiation factors, stimulates binding of mRNA and methionyl-tRNAi to the 40S ribosome. The eIF-3 complex specifically targets and initiates translation of a subset of mRNAs involved in cell proliferation. This subunit can bind 18S rRNA. The polypeptide is Eukaryotic translation initiation factor 3 subunit G (Lodderomyces elongisporus (strain ATCC 11503 / CBS 2605 / JCM 1781 / NBRC 1676 / NRRL YB-4239) (Yeast)).